Here is a 517-residue protein sequence, read N- to C-terminus: Gamma-1-syntrophin (517 aa).

One can recognise a PDZ domain in the interval 57 to 140 (TVTIRRQTVG…EVTLTVSFLK (84 aa)). One can recognise a PH domain in the interval 283–390 (QIVYMGWCEA…WERAFQTATF (108 aa)).

It belongs to the syntrophin family. As to quaternary structure, interacts with the dystrophin protein DMD and related proteins DTNA and DTNB. Interacts with DGKZ.

The protein resides in the cytoplasm. It is found in the cytoskeleton. The protein localises to the nucleus. In terms of biological role, adapter protein that binds to and probably organizes the subcellular localization of a variety of proteins. May link various receptors to the actin cytoskeleton and the dystrophin glycoprotein complex. May participate in regulating the subcellular location of diacylglycerol kinase-zeta to ensure that diacylglycerol is rapidly inactivated following receptor activation. The polypeptide is Gamma-1-syntrophin (Sntg1) (Mus musculus (Mouse)).